The chain runs to 328 residues: Malate dehydrogenase (328 aa).

11–17 (GAAGQIG) is a binding site for NAD(+). Substrate contacts are provided by arginine 94 and arginine 100. NAD(+) contacts are provided by residues asparagine 107, glutamine 114, and 131–133 (VGN). 2 residues coordinate substrate: asparagine 133 and arginine 164. Catalysis depends on histidine 189, which acts as the Proton acceptor.

Belongs to the LDH/MDH superfamily. MDH type 2 family.

It catalyses the reaction (S)-malate + NAD(+) = oxaloacetate + NADH + H(+). Its function is as follows. Catalyzes the reversible oxidation of malate to oxaloacetate. The sequence is that of Malate dehydrogenase from Xanthomonas axonopodis pv. citri (strain 306).